Here is a 345-residue protein sequence, read N- to C-terminus: Glycerol-3-phosphate dehydrogenase [NAD(P)+] (345 aa).

5 residues coordinate NADPH: Ser11, Trp12, His32, Arg33, and Lys106. Sn-glycerol 3-phosphate-binding residues include Lys106, Gly137, and Ser139. NADPH is bound at residue Ala141. Residues Lys192, Asp245, Ser255, Arg256, and Asn257 each coordinate sn-glycerol 3-phosphate. Lys192 serves as the catalytic Proton acceptor. Arg256 is an NADPH binding site. Residues Val280 and Glu282 each coordinate NADPH.

It belongs to the NAD-dependent glycerol-3-phosphate dehydrogenase family.

It is found in the cytoplasm. It catalyses the reaction sn-glycerol 3-phosphate + NAD(+) = dihydroxyacetone phosphate + NADH + H(+). The enzyme catalyses sn-glycerol 3-phosphate + NADP(+) = dihydroxyacetone phosphate + NADPH + H(+). The protein operates within membrane lipid metabolism; glycerophospholipid metabolism. Its function is as follows. Catalyzes the reduction of the glycolytic intermediate dihydroxyacetone phosphate (DHAP) to sn-glycerol 3-phosphate (G3P), the key precursor for phospholipid synthesis. This chain is Glycerol-3-phosphate dehydrogenase [NAD(P)+], found in Bacillus velezensis (strain DSM 23117 / BGSC 10A6 / LMG 26770 / FZB42) (Bacillus amyloliquefaciens subsp. plantarum).